We begin with the raw amino-acid sequence, 294 residues long: Glycine--tRNA ligase alpha subunit (294 aa).

The protein belongs to the class-II aminoacyl-tRNA synthetase family. As to quaternary structure, tetramer of two alpha and two beta subunits.

It localises to the cytoplasm. The enzyme catalyses tRNA(Gly) + glycine + ATP = glycyl-tRNA(Gly) + AMP + diphosphate. This chain is Glycine--tRNA ligase alpha subunit, found in Trichodesmium erythraeum (strain IMS101).